A 265-amino-acid chain; its full sequence is S-acyl fatty acid synthase thioesterase, medium chain (265 aa).

Met1 carries the post-translational modification N-acetylmethionine. Catalysis depends on residues Ser101 and His237.

This sequence belongs to the thioesterase family. Interacts (via C-terminus) with FASN. Detected both in lactating and non-lactating breast epithelium (at protein level). Isoform 2 is up-regulated in bone marrow-derived mononuclear cells of rheumatoid arthritis patients.

Its subcellular location is the cytoplasm. The protein localises to the cytosol. It catalyses the reaction (9Z)-octadecenoyl-[ACP] + H2O = (9Z)-octadecenoate + holo-[ACP] + H(+). The catalysed reaction is decanoyl-CoA + H2O = decanoate + CoA + H(+). It carries out the reaction dodecanoyl-CoA + H2O = dodecanoate + CoA + H(+). The enzyme catalyses tetradecanoyl-CoA + H2O = tetradecanoate + CoA + H(+). It catalyses the reaction hexadecanoyl-CoA + H2O = hexadecanoate + CoA + H(+). Contributes to the release of free fatty acids from fatty acid synthase (FASN). Has broad substrate specificity, giving rise to a range of free fatty acids with chain lengths between 10 and 16 carbon atoms (C10 - C16). This chain is S-acyl fatty acid synthase thioesterase, medium chain, found in Homo sapiens (Human).